The sequence spans 86 residues: MKKLTKTNLKYKKQSLKIGDLVEIIAGNDKKKQGTVKAIIKSQEKVIVEGINQRFKHIKPQRSNETGKINQFEAPIHRSNVKKINN.

The protein belongs to the universal ribosomal protein uL24 family. In terms of assembly, part of the 50S ribosomal subunit.

It is found in the plastid. It localises to the chloroplast. Functionally, one of two assembly initiator proteins, it binds directly to the 5'-end of the 23S rRNA, where it nucleates assembly of the 50S subunit. This is Large ribosomal subunit protein uL24c (rpl24) from Heterosigma akashiwo (strain NIES-293 / 8280G21-1).